A 267-amino-acid polypeptide reads, in one-letter code: Short-chain dehydrogenase/reductase GME11361 (267 aa).

9 residues coordinate NADP(+): isoleucine 10, threonine 36, lysine 42, aspartate 57, asparagine 80, tyrosine 129, lysine 133, valine 162, and serine 164. The active-site Proton acceptor is the tyrosine 129. Lysine 133 (lowers pKa of active site Tyr) is an active-site residue.

It belongs to the short-chain dehydrogenases/reductases (SDR) family.

Its pathway is secondary metabolite biosynthesis. In terms of biological role, short-chain dehydrogenase/reductase; part of the gene cluster that mediates the biosynthesis of dibenzodioxocinones such as pestalotiollide B, a novel class of inhibitors against cholesterol ester transfer protein (CEPT). The biosynthesis initiates from condensation of acetate and malonate units catalyzed by the non-reducing PKS pks8/GME11356. Pks8/GME11356 lacks a thioesterase (TE) domain, which is important to the cyclizing of the third ring of atrochrysone carboxylic acid, and the esterase GME11355 might play the role of TE and catalyzes the cyclization reaction of the C ring. The lactamase-like protein GME11357 (or other beta-lactamases in Pestalotiopsis microspora) probably hydrolyzes the thioester bond between the ACP of pks8/GME11356 and the intermediate to release atrochrysone carboxylic acid, which is spontaneously dehydrates to form endocrocin anthrone. Endocrocin anthrone is further converted to emodin via the endocrocin intermediate. Emodin is then oxidized by several enzymes such as the Baeyer-Villiger oxidase GME11358, the oxidoreductase GME11367, the short chain dehydrogenase/reductase GME11373, as well as by other oxidoreductases from the cluster, to modify the A and C rings and open the B ring, and finally yield monodictyphenone. The prenyltransferase GME11375 may catalyze the addition reaction between the C5 side chains and the carbon bone of dibenzodioxocinones. The remaining biochemical reactions to the final product dibenzodioxocinones should be methylation catalyzed by methyltransferase GME11366 and reduction and lactonization reaction catalyzed by a series of oxidordeuctases. This chain is Short-chain dehydrogenase/reductase GME11361, found in Pestalotiopsis microspora.